A 424-amino-acid chain; its full sequence is Microcin H47 secretion protein MchE (424 aa).

Residues 1-25 (MFRQDALENRKMKWQGRAILLPGIP) are Cytoplasmic-facing. Residues 26-46 (LWLIMLGSIVFITAFLMFIIV) form a helical membrane-spanning segment. At 47–424 (GTYSRRVNVS…KHSATGPLND (378 aa)) the chain is on the periplasmic side.

Belongs to the membrane fusion protein (MFP) (TC 8.A.1) family.

The protein resides in the cell inner membrane. Probably involved, in conjunction with MchF, in the secretion of microcin H47. The protein is Microcin H47 secretion protein MchE (mchE) of Escherichia coli.